A 680-amino-acid polypeptide reads, in one-letter code: PAN2-PAN3 deadenylation complex subunit PAN3 (680 aa).

Disordered stretches follow at residues 1–26 (MATT…RADT), 51–87 (HDQT…SKKT), and 99–120 (FTPR…TDIP). The C3H1-type zinc-finger motif lies at 25–54 (DTKDTLCRNILIYGHCRYEDAGCAFNHDQT). Residues 52-64 (DQTKKSPKPDATT) are compositionally biased toward basic and acidic residues. The PABPC-interacting motif-2 (PAM-2) signature appears at 62–82 (ATTRKTLNVDSAPFTPAVSSQ). Positions 99-117 (FTPRATAATPTGTPTAQET) are enriched in low complexity. The tract at residues 256–522 (QTMTGTAALQ…TVKNLVAGIN (267 aa)) is pseudokinase domain. Residues Arg311, 360-367 (EYYPLAET), and 422-423 (TK) contribute to the ATP site. Residues 523 to 561 (EHVMTAFDAQQRQSDMLYSELYREVENGRVLRLLMKLAT) adopt a coiled-coil conformation. Residues 562-680 (INERTEYDKD…VHHPSHRDRF (119 aa)) form a knob domain region. Over residues 655–669 (SGNGRGGPVASGSGH) the composition is skewed to gly residues. Residues 655–680 (SGNGRGGPVASGSGHGVHHPSHRDRF) are disordered. Residues 670–680 (GVHHPSHRDRF) are compositionally biased toward basic residues.

It belongs to the protein kinase superfamily. PAN3 family. Homodimer. Forms a heterotrimer with a catalytic subunit PAN2 to form the poly(A)-nuclease (PAN) deadenylation complex. Interacts (via PAM-2 motif) with poly(A)-binding protein PAB1 (via PABC domain), conferring substrate specificity of the enzyme complex.

It localises to the cytoplasm. In terms of biological role, regulatory subunit of the poly(A)-nuclease (PAN) deadenylation complex, one of two cytoplasmic mRNA deadenylases involved in mRNA turnover. PAN specifically shortens poly(A) tails of RNA and the activity is stimulated by poly(A)-binding protein PAB1. PAN deadenylation is followed by rapid degradation of the shortened mRNA tails by the CCR4-NOT complex. Deadenylated mRNAs are then degraded by two alternative mechanisms, namely exosome-mediated 3'-5' exonucleolytic degradation, or deadenylation-dependent mRNA decaping and subsequent 5'-3' exonucleolytic degradation by XRN1. May also be involved in post-transcriptional maturation of mRNA poly(A) tails. PAN3 acts as a positive regulator for PAN activity, recruiting the catalytic subunit PAN2 to mRNA via its interaction with RNA and with PAB1. The chain is PAN2-PAN3 deadenylation complex subunit PAN3 from Pyricularia oryzae (strain 70-15 / ATCC MYA-4617 / FGSC 8958) (Rice blast fungus).